The following is a 1001-amino-acid chain: ATP-dependent DNA/RNA helicase DHX36 (1001 aa).

Residues 1–44 (MSYDYHQSWSRDGGPRGSGQGSSGGGGGGSRGSGGGGGGRGGRG) form a required for recruitment to cytoplasmic stress granules region. A disordered region spans residues 1–54 (MSYDYHQSWSRDGGPRGSGQGSSGGGGGGSRGSGGGGGGRGGRGRHPAHLKGRE). Positions 1 to 97 (MSYDYHQSWS…IVQLLNSVQA (97 aa)) are required for the pre-miR-134 transport. The segment at 1–193 (MSYDYHQSWS…KKTDPRYIEM (193 aa)) is necessary for nuclear and nucleolar caps localizations. Residues 15–41 (PRGSGQGSSGGGGGGSRGSGGGGGGRG) are compositionally biased toward gly residues. Residues 46 to 68 (HPAHLKGREIGLWYAKKQTQKNK) are DSM (DHX36-specific motif). The required for G4-DNA- and G4-RNA-binding stretch occupies residues 46–98 (HPAHLKGREIGLWYAKKQTQKNKEAERQERAVVHMDERREEQIVQLLNSVQAK). RecA-like domain regions lie at residues 99–379 (TDKD…MIHI) and 380–621 (PGFT…DYQL). The stretch at 120-147 (EVSSEKKINSEKKLDNQEKKLLNQEKKT) forms a coiled coil. Position 154 is a phosphoserine (Ser-154). Residues 210-380 (VNLINNHQVT…FGNCPMIHIP (171 aa)) enclose the Helicase ATP-binding domain. 226 to 231 (GCGKTT) contacts ATP. A necessary for interaction with single-stranded DNA at the 3'-end of the G4-DNA structure region spans residues 258–310 (RRISAISVAERVATERAESCGNGNSTGYQIRLQSRLPRKQGSILYCTTGIILQ). Positions 327–330 (DEIH) match the DEAH box motif. Positions 328 and 330 each coordinate Mg(2+). One can recognise a Helicase C-terminal domain in the interval 470–640 (ALIRYIVLEE…ELCLQIKILR (171 aa)). The necessary for interaction with single-stranded DNA at the 3'-end of the G4-DNA structure stretch occupies residues 491-550 (WDNISTLHDLLMSQVMFKSDKFLIIPLHSLMPTVNQTQVFKKTPPGVRKIVIATNIAETS). The short motif at 510–521 (DKFLIIPLHSLM) is the Nuclear localization signal element. Residues Ser-550 and 595 to 598 (RAGR) contribute to the ATP site. The interval 622–691 (PEILRTPLEE…LGVHLARLPV (70 aa)) is WH domain. Necessary for interaction with single-stranded DNA at the 3'-end of the G4-DNA structure regions lie at residues 631–690 (ELCL…ARLP), 842–853 (NLGKKRKMVKVH), and 863–893 (HPKS…IYLY). The OB-fold-like subdomains stretch occupies residues 834 to 898 (PKVAKIRLNL…SIYLYDCTEV (65 aa)). Lys-940 carries the N6-acetyllysine modification. Ser-956 bears the Phosphoserine mark.

This sequence belongs to the DEAD box helicase family. DEAH subfamily. Found in a multi-helicase-TICAM1 complex at least composed of DHX36, DDX1, DDX21 and TICAM1; this complex exists in resting cells with or without dsRNA poly(I:C) ligand stimulation. Interacts (via C-terminus) with TICAM1 (via TIR domain). Interacts (via C-terminus) with DDX21; this interaction serves as bridges to TICAM1. Interacts with TERT; this interaction is dependent on the ability of DHX36 to bind to the G-quadruplex RNA (G4-RNA) structure present in the telomerase RNA template component (TERC). Interacts with DKC1; this interaction is dependent on the ability of DHX36 to bind to the G4-RNA structure present in TERC. Interacts with PARN; this interaction stimulates PARN to enhance uPA mRNA decay. Interacts with EXOSC3; this interaction occurs in a RNase-insensitive manner. Interacts with EXOSC10; this interaction occurs in a RNase-insensitive manner. Interacts with ILF3; this interaction occurs in a RNA-dependent manner. Interacts with ELAVL1; this interaction occurs in an RNA-dependent manner. Interacts with DDX5; this interaction occurs in a RNA-dependent manner. Interacts with DDX17; this interaction occurs in a RNA-dependent manner. Interacts with HDAC1; this interaction occurs in a RNA-dependent manner. Interacts with HDAC3; this interaction occurs in a RNA-dependent manner. Interacts with HDAC4. Interacts with AGO1. Interacts with AGO2. Interacts with ERCC6. Requires Mg(2+) as cofactor. In terms of tissue distribution, expressed in spermatogonia stem cells and primary spermatocytes (at protein level). Expressed strongly in testis. Weakly expressed in heart, lung, liver, kidney, small intestine, spleen, lymphe node and thymus.

The protein resides in the nucleus. It is found in the cytoplasm. It localises to the cytosol. The protein localises to the stress granule. Its subcellular location is the nucleus speckle. The protein resides in the chromosome. It is found in the telomere. It localises to the mitochondrion. The protein localises to the perikaryon. Its subcellular location is the cell projection. The protein resides in the dendrite. It is found in the axon. It carries out the reaction ATP + H2O = ADP + phosphate + H(+). With respect to regulation, ATPase activity is enhanced in the presence of homomeric poly(U) RNAs, but not by double-stranded DNA (dsDNA), double-stranded RNA (dsRNA) and tRNA. In terms of biological role, multifunctional ATP-dependent helicase that unwinds G-quadruplex (G4) structures. Plays a role in many biological processes such as genomic integrity, gene expression regulations and as a sensor to initiate antiviral responses. G4 structures correspond to helical structures containing guanine tetrads. Binds with high affinity to and unwinds G4 structures that are formed in nucleic acids (G4-DNA and G4-RNA). Plays a role in genomic integrity. Converts the G4-RNA structure present in telomerase RNA template component (TREC) into a double-stranded RNA to promote P1 helix formation that acts as a template boundary ensuring accurate reverse transcription. Plays a role in transcriptional regulation. Resolves G4-DNA structures in promoters of genes, such as YY1, KIT/c-kit and ALPL and positively regulates their expression. Plays a role in post-transcriptional regulation. Unwinds a G4-RNA structure located in the 3'-UTR polyadenylation site of the pre-mRNA TP53 and stimulates TP53 pre-mRNA 3'-end processing in response to ultraviolet (UV)-induced DNA damage. Binds to the precursor-microRNA-134 (pre-miR-134) terminal loop and regulates its transport into the synapto-dendritic compartment. Involved in the pre-miR-134-dependent inhibition of target gene expression and the control of dendritic spine size. Plays a role in the regulation of cytoplasmic mRNA translation and mRNA stability. Binds to both G4-RNA structures and alternative non-quadruplex-forming sequence within the 3'-UTR of the PITX1 mRNA regulating negatively PITX1 protein expression. Binds to both G4-RNA structure in the 5'-UTR and AU-rich elements (AREs) localized in the 3'-UTR of NKX2-5 mRNA to either stimulate protein translation or induce mRNA decay in an ELAVL1-dependent manner, respectively. Also binds to ARE sequences present in several mRNAs mediating exosome-mediated 3'-5' mRNA degradation. Involved in cytoplasmic urokinase-type plasminogen activator (uPA) mRNA decay. Component of a multi-helicase-TICAM1 complex that acts as a cytoplasmic sensor of viral double-stranded RNA (dsRNA) and plays a role in the activation of a cascade of antiviral responses including the induction of pro-inflammatory cytokines via the adapter molecule TICAM1. Required for the early embryonic development and hematopoiesis. Involved in the regulation of cardioblast differentiation and proliferation during heart development. Involved in spermatogonia differentiation. May play a role in ossification. This Mus musculus (Mouse) protein is ATP-dependent DNA/RNA helicase DHX36.